The sequence spans 162 residues: UPF0114 protein PA4574 (162 aa).

The next 3 membrane-spanning stretches (helical) occupy residues 10 to 32 (YASRWLLAPIYMGLSLALLALTI), 53 to 75 (LILVLLSLIDMALVGGLLVMVMI), and 136 to 156 (LMWYVIIHMTFVLSAFAMGYL).

The protein belongs to the UPF0114 family.

The protein localises to the cell membrane. In Pseudomonas aeruginosa (strain ATCC 15692 / DSM 22644 / CIP 104116 / JCM 14847 / LMG 12228 / 1C / PRS 101 / PAO1), this protein is UPF0114 protein PA4574.